Consider the following 144-residue polypeptide: Ninjurin-2 (144 aa).

The Extracellular portion of the chain corresponds to 1–62; it reads MESDREIIHL…KSVLEQGPFS (62 aa). Residues 27-39 are helix alpha1; it reads NHYATKKSVAESM. Residues 40-59 are helix alpha2; sequence LDVALFMSNAMRLKSVLEQG. A helical membrane pass occupies residues 63-94; the sequence is QYYTTLLTLISASLLLQVVIGILLVVIARLNL. Topologically, residues 95-98 are cytoplasmic; sequence NEVE. The chain crosses the membrane as a helical span at residues 99–128; that stretch reads NQWRLNQLNNAATTLVFITVVINIFITAFG. Glutamine 105 is a cholesterol binding site. Over 129–144 the chain is Extracellular; sequence AHKTGSVAARTSSNPI.

The protein belongs to the ninjurin family. Homooligomer; in response to stimuli, homooligomerizes into filaments. In contrast to NINJ1, the filament is curved toward the intracellular space, preventing its circularization on a relatively flat membrane to mediate plasma membrane rupture: curvature is caused by cholesterol-binding at the cytoplasmic leaflet.

The protein localises to the cell membrane. In terms of biological role, its role in unclear. In contrast to NINJ1 paralog, does not mediate plasma membrane rupture (cytolysis) downstream of necroptotic and pyroptotic programmed cell death. While it is able to oligomerize and form filaments, filaments are curved toward the intracellular space, preventing circularization to mediate plasma membrane rupture. May act as a homophilic transmembrane adhesion molecule involved in nerve regeneration. Promotes axonal growth. The protein is Ninjurin-2 (Ninj2) of Rattus norvegicus (Rat).